The chain runs to 303 residues: Nucleotide-binding protein SAB0719 (303 aa).

18 to 25 is an ATP binding site; sequence GLSGAGKS. 69 to 72 provides a ligand contact to GTP; the sequence is DLRG.

The protein belongs to the RapZ-like family.

Functionally, displays ATPase and GTPase activities. This chain is Nucleotide-binding protein SAB0719, found in Staphylococcus aureus (strain bovine RF122 / ET3-1).